The following is a 187-amino-acid chain: Adenine phosphoribosyltransferase (187 aa).

This sequence belongs to the purine/pyrimidine phosphoribosyltransferase family. Homodimer.

The protein resides in the cytoplasm. The enzyme catalyses AMP + diphosphate = 5-phospho-alpha-D-ribose 1-diphosphate + adenine. It participates in purine metabolism; AMP biosynthesis via salvage pathway; AMP from adenine: step 1/1. Its function is as follows. Catalyzes a salvage reaction resulting in the formation of AMP, that is energically less costly than de novo synthesis. This Yersinia pestis (strain Pestoides F) protein is Adenine phosphoribosyltransferase.